The chain runs to 1103 residues: Coatomer subunit beta (1103 aa).

7 HEAT repeats span residues 51 to 89, 94 to 129, 130 to 166, 247 to 284, 322 to 359, 365 to 404, and 405 to 441; these read EAYT…CRPD, EEMI…RQFK, VLEP…NFGL, QQKA…APVS, RTME…KNSV, VLKR…RFPE, and AAAS…TCVH.

As to quaternary structure, oligomeric complex that consists of at least the alpha, beta, beta', gamma, delta, epsilon and zeta subunits.

It is found in the cytoplasm. The protein resides in the golgi apparatus membrane. It localises to the cytoplasmic vesicle. The protein localises to the COPI-coated vesicle membrane. Functionally, the coatomer is a cytosolic protein complex that binds to dilysine motifs and reversibly associates with Golgi non-clathrin-coated vesicles, which further mediate biosynthetic protein transport from the ER, via the Golgi up to the trans Golgi network. Coatomer complex is required for budding from Golgi membranes, and is essential for the retrograde Golgi-to-ER transport of dilysine-tagged proteins. This Toxoplasma gondii protein is Coatomer subunit beta.